Here is a 182-residue protein sequence, read N- to C-terminus: Glutathione-regulated potassium-efflux system ancillary protein KefG (182 aa).

Belongs to the NAD(P)H dehydrogenase (quinone) family. KefG subfamily. Interacts with KefB.

Its subcellular location is the cell inner membrane. It catalyses the reaction a quinone + NADH + H(+) = a quinol + NAD(+). The catalysed reaction is a quinone + NADPH + H(+) = a quinol + NADP(+). In terms of biological role, regulatory subunit of a potassium efflux system that confers protection against electrophiles. Required for full activity of KefB. The chain is Glutathione-regulated potassium-efflux system ancillary protein KefG from Yersinia pestis bv. Antiqua (strain Nepal516).